The primary structure comprises 1171 residues: Structural maintenance of chromosomes protein 2-2 (1171 aa).

Residues 2 to 1158 (HIKEICLEGF…DVLFRTKFVD (1157 aa)) form the Zinc-hook domain. 32-39 (GLNGSGKS) is a binding site for ATP. Residues 172–510 (RMYENKKEAA…LANVQFTYRD (339 aa)) are a coiled coil. Residues 518–635 (SKVKGVVAKL…KTTDAAKEVA (118 aa)) enclose the SMC hinge domain. The stretch at 674–1026 (HDLAEAETKF…LDEKKKETLK (353 aa)) forms a coiled coil.

This sequence belongs to the SMC family. SMC2 subfamily. In terms of assembly, forms a heterodimer with SMC4. Component of the condensin complex, which contains the SMC2 and SMC4 heterodimer, and three non SMC subunits that probably regulate the complex: CAPH, CAPD2 and CAPG. As to expression, highly expressed in roots and young floral buds.

It localises to the nucleus. In terms of biological role, central component of the condensin complex, a complex required for conversion of interphase chromatin into mitotic-like condense chromosomes. The condensin complex probably introduces positive supercoils into relaxed DNA in the presence of type I topoisomerases and converts nicked DNA into positive knotted forms in the presence of type II topoisomerases. Also involved in chromosome segregation in meiosis. The sequence is that of Structural maintenance of chromosomes protein 2-2 (SMC2-2) from Arabidopsis thaliana (Mouse-ear cress).